The chain runs to 399 residues: Probable peptidoglycan glycosyltransferase FtsW (399 aa).

Residues 1-25 (MTAAAPSKPLPRTPRVRQAYPLDYP) lie on the Cytoplasmic side of the membrane. The helical transmembrane segment at 26-46 (LLLCALGLLAFGWVMVTSASM) threads the bilayer. Over 47 to 64 (SIAEACCQNPFHYSIRHA) the chain is Periplasmic. Residues 65 to 85 (IALGLALMLGLMAYSVPSHWW) traverse the membrane as a helical segment. The Cytoplasmic segment spans residues 86 to 88 (ERH). A helical transmembrane segment spans residues 89–109 (GVWLFLASALVLILVLIPGIG). Topologically, residues 110–117 (RTVNGATR) are periplasmic. The helical transmembrane segment at 118–138 (WIPLGPLNVQPSEFVKLFAIL) threads the bilayer. Residues 139-153 (YVAGYLVRHADKVVN) are Cytoplasmic-facing. The chain crosses the membrane as a helical span at residues 154 to 174 (QLSGFIRPLILIGAAALLILM). Residues 175-177 (QPD) lie on the Periplasmic side of the membrane. The next 2 helical transmembrane spans lie at 178–198 (FGTT…GGAS) and 199–219 (LLPF…LVIF). The Periplasmic portion of the chain corresponds to 220–281 (SPYRLERVVS…PEAHTDFLPS (62 aa)). A helical membrane pass occupies residues 282–302 (VIGEELGLAGMLVLIAAFVFL). Topologically, residues 303–326 (SWRAMSIGVRAEALKRPFESYVAQ) are cytoplasmic. Residues 327–347 (GIGLWIGLQSFVNLGVNVGIL) form a helical membrane-spanning segment. Residues 348-353 (PTKGLT) lie on the Periplasmic side of the membrane. Residues 354 to 374 (LPFMSYGSNSLMVGCMAVAIL) traverse the membrane as a helical segment. At 375-399 (LRIDVMLRRVESEAKFKRGTPWSRA) the chain is on the cytoplasmic side.

It belongs to the SEDS family. FtsW subfamily.

It localises to the cell inner membrane. It carries out the reaction [GlcNAc-(1-&gt;4)-Mur2Ac(oyl-L-Ala-gamma-D-Glu-L-Lys-D-Ala-D-Ala)](n)-di-trans,octa-cis-undecaprenyl diphosphate + beta-D-GlcNAc-(1-&gt;4)-Mur2Ac(oyl-L-Ala-gamma-D-Glu-L-Lys-D-Ala-D-Ala)-di-trans,octa-cis-undecaprenyl diphosphate = [GlcNAc-(1-&gt;4)-Mur2Ac(oyl-L-Ala-gamma-D-Glu-L-Lys-D-Ala-D-Ala)](n+1)-di-trans,octa-cis-undecaprenyl diphosphate + di-trans,octa-cis-undecaprenyl diphosphate + H(+). The protein operates within cell wall biogenesis; peptidoglycan biosynthesis. Functionally, peptidoglycan polymerase that is essential for cell division. This chain is Probable peptidoglycan glycosyltransferase FtsW, found in Allochromatium vinosum (strain ATCC 17899 / DSM 180 / NBRC 103801 / NCIMB 10441 / D) (Chromatium vinosum).